Here is a 477-residue protein sequence, read N- to C-terminus: MSPQTETKASVGFKAGVKDYKLTYYTPDYETKDTDILAAFRVSPQPGVPPEEAGAAVAAESSTGTWTTVWTDGLTSLDRYKGRCYHIESVVGEENQYIAYVAYPLDLFEEGSVTNMFTSIVGNVFGFKALRALRLEDLRIPTSYSKTFQGPPHGIQVERDKLNKYGRPLLGCTIKPKLGLSAKNYGRAVYECLRGGLDFTKDDENVNSQPFMRWRDRFLFCAEAIYKAQAETGEIKGHYLNATAGTCEEMIKRAVFARELGAPIVMHDYLTGGFTANTSLAHYCRDNGLLLHIHRAMHAVIDRQKNHGMHFRVLAKALRMSGGDHIHAGTVVGKLEGEREMTLGFVDLLRDDFIEKDRSRGIFFTQDWVSMPGVLPVASGGIHVWHMPALTEIFGDDSVLQFGGGTLGHPWGNAPGAVANRVALEACVQARNEGRDLAREGNEIIREACKWSPELAAACEVWKEIKFEFKPVDTLDL.

Positions 1 to 2 (MS) are excised as a propeptide. The residue at position 3 (proline 3) is an N-acetylproline. An N6,N6,N6-trimethyllysine modification is found at lysine 14. Residues asparagine 123 and threonine 173 each coordinate substrate. Lysine 175 serves as the catalytic Proton acceptor. Lysine 177 is a substrate binding site. Residues lysine 201, aspartate 203, and glutamate 204 each contribute to the Mg(2+) site. Lysine 201 carries the N6-carboxylysine modification. Histidine 294 serves as the catalytic Proton acceptor. Substrate contacts are provided by arginine 295, histidine 327, and serine 379.

Belongs to the RuBisCO large chain family. Type I subfamily. Heterohexadecamer of 8 large chains and 8 small chains; disulfide-linked. The disulfide link is formed within the large subunit homodimers. Mg(2+) is required as a cofactor. In terms of processing, the disulfide bond which can form in the large chain dimeric partners within the hexadecamer appears to be associated with oxidative stress and protein turnover.

Its subcellular location is the plastid. The protein resides in the chloroplast. It carries out the reaction 2 (2R)-3-phosphoglycerate + 2 H(+) = D-ribulose 1,5-bisphosphate + CO2 + H2O. It catalyses the reaction D-ribulose 1,5-bisphosphate + O2 = 2-phosphoglycolate + (2R)-3-phosphoglycerate + 2 H(+). Its function is as follows. RuBisCO catalyzes two reactions: the carboxylation of D-ribulose 1,5-bisphosphate, the primary event in carbon dioxide fixation, as well as the oxidative fragmentation of the pentose substrate in the photorespiration process. Both reactions occur simultaneously and in competition at the same active site. In Dioscorea elephantipes (Elephant's foot yam), this protein is Ribulose bisphosphate carboxylase large chain.